We begin with the raw amino-acid sequence, 874 residues long: S-layer protein (874 aa).

The first 30 residues, 1 to 30 (MAKTNSYKKVIAGTMTAAMVAGVVSPVAAA), serve as a signal peptide directing secretion. SLH domains follow at residues 31–93 (GKSF…NAQP), 94–151 (SFKD…KVDG), and 152–214 (TLVT…ENSD).

It is found in the secreted. The protein resides in the cell wall. Its subcellular location is the S-layer. Functionally, the S-layer is a paracrystalline mono-layered assembly of proteins which coat the surface of bacteria. This is S-layer protein from Bacillus licheniformis.